Reading from the N-terminus, the 289-residue chain is Formamidopyrimidine-DNA glycosylase (289 aa).

The active-site Schiff-base intermediate with DNA is Pro2. The active-site Proton donor is Glu3. Lys61 functions as the Proton donor; for beta-elimination activity in the catalytic mechanism. DNA-binding residues include His96, Arg115, and Lys161. The FPG-type zinc-finger motif lies at 247 to 281; sequence SAYGQEDRPCPRCGTAIRREKFMNRSSFSCPKCQR. Arg271 (proton donor; for delta-elimination activity) is an active-site residue.

The protein belongs to the FPG family. Monomer. It depends on Zn(2+) as a cofactor.

It carries out the reaction Hydrolysis of DNA containing ring-opened 7-methylguanine residues, releasing 2,6-diamino-4-hydroxy-5-(N-methyl)formamidopyrimidine.. The catalysed reaction is 2'-deoxyribonucleotide-(2'-deoxyribose 5'-phosphate)-2'-deoxyribonucleotide-DNA = a 3'-end 2'-deoxyribonucleotide-(2,3-dehydro-2,3-deoxyribose 5'-phosphate)-DNA + a 5'-end 5'-phospho-2'-deoxyribonucleoside-DNA + H(+). Its function is as follows. Involved in base excision repair of DNA damaged by oxidation or by mutagenic agents. Acts as a DNA glycosylase that recognizes and removes damaged bases. Has a preference for oxidized purines, such as 7,8-dihydro-8-oxoguanine (8-oxoG). Has AP (apurinic/apyrimidinic) lyase activity and introduces nicks in the DNA strand. Cleaves the DNA backbone by beta-delta elimination to generate a single-strand break at the site of the removed base with both 3'- and 5'-phosphates. The chain is Formamidopyrimidine-DNA glycosylase from Rhodococcus opacus (strain B4).